A 379-amino-acid chain; its full sequence is tRNA 2-selenouridine synthase (379 aa).

One can recognise a Rhodanese domain in the interval 17-140; the sequence is FLSGAPLLDT…MRRFLIESLE (124 aa). Cysteine 100 functions as the S-selanylcysteine intermediate in the catalytic mechanism.

It belongs to the SelU family. Monomer.

It carries out the reaction 5-methylaminomethyl-2-thiouridine(34) in tRNA + selenophosphate + (2E)-geranyl diphosphate + H2O + H(+) = 5-methylaminomethyl-2-selenouridine(34) in tRNA + (2E)-thiogeraniol + phosphate + diphosphate. The catalysed reaction is 5-methylaminomethyl-2-thiouridine(34) in tRNA + (2E)-geranyl diphosphate = 5-methylaminomethyl-S-(2E)-geranyl-thiouridine(34) in tRNA + diphosphate. It catalyses the reaction 5-methylaminomethyl-S-(2E)-geranyl-thiouridine(34) in tRNA + selenophosphate + H(+) = 5-methylaminomethyl-2-(Se-phospho)selenouridine(34) in tRNA + (2E)-thiogeraniol. The enzyme catalyses 5-methylaminomethyl-2-(Se-phospho)selenouridine(34) in tRNA + H2O = 5-methylaminomethyl-2-selenouridine(34) in tRNA + phosphate. Its function is as follows. Involved in the post-transcriptional modification of the uridine at the wobble position (U34) of tRNA(Lys), tRNA(Glu) and tRNA(Gln). Catalyzes the conversion of 2-thiouridine (S2U-RNA) to 2-selenouridine (Se2U-RNA). Acts in a two-step process involving geranylation of 2-thiouridine (S2U) to S-geranyl-2-thiouridine (geS2U) and subsequent selenation of the latter derivative to 2-selenouridine (Se2U) in the tRNA chain. The chain is tRNA 2-selenouridine synthase from Hahella chejuensis (strain KCTC 2396).